We begin with the raw amino-acid sequence, 355 residues long: Protein ATP1B4 (355 aa).

The Nuclear portion of the chain corresponds to 1–108 (MRRQLRSRRA…SLARTGQSLS (108 aa)). The tract at residues 35–76 (EEEEAEEARVMVVPDLEEEEKEEEEEKEEDEKEEEESHHQDT) is disordered. Positions 49-68 (DLEEEEKEEEEEKEEDEKEE) are enriched in acidic residues. The chain crosses the membrane as a helical; Signal-anchor for type II membrane protein span at residues 109-129 (LLLVIYFFFYASLAAVITLCM). The Perinuclear space segment spans residues 130–355 (YTLFLTISPY…RVIFTLNIET (226 aa)).

It belongs to the X(+)/potassium ATPases subunit beta family. As to quaternary structure, associates with a SMAD7-transcriptional complex. Interacts with SNW1 and TOR1AIP1. Does not associate with known Na,K-ATPase alpha-subunits. In terms of tissue distribution, expressed in skeletal muscle (at protein level). Expressed during postnatal development in skeletal muscle and heart.

It localises to the nucleus inner membrane. Its function is as follows. May act as a transcriptional coregulator during muscle development through its interaction with SNW1. Has lost its ancestral function as a Na,K-ATPase beta-subunit. This Sus scrofa (Pig) protein is Protein ATP1B4 (ATP1B4).